A 350-amino-acid chain; its full sequence is Isopentenyl-diphosphate delta-isomerase (350 aa).

Position 15–16 (15–16 (RK)) interacts with substrate. Residues S73, 74–76 (SMT), S104, and N132 each bind FMN. 104 to 106 (SQR) contributes to the substrate binding site. Residue Q167 participates in substrate binding. E168 lines the Mg(2+) pocket. Residues K199, T229, 279–281 (GLR), and 300–301 (AM) each bind FMN.

Belongs to the IPP isomerase type 2 family. Homooctamer. Dimer of tetramers. It depends on FMN as a cofactor. NADPH is required as a cofactor. Mg(2+) serves as cofactor.

The protein resides in the cytoplasm. The enzyme catalyses isopentenyl diphosphate = dimethylallyl diphosphate. Its function is as follows. Involved in the biosynthesis of isoprenoids. Catalyzes the 1,3-allylic rearrangement of the homoallylic substrate isopentenyl (IPP) to its allylic isomer, dimethylallyl diphosphate (DMAPP). The polypeptide is Isopentenyl-diphosphate delta-isomerase (Nostoc sp. (strain PCC 7120 / SAG 25.82 / UTEX 2576)).